The primary structure comprises 388 residues: Lipid-A-disaccharide synthase (388 aa).

Belongs to the LpxB family.

It carries out the reaction a lipid X + a UDP-2-N,3-O-bis[(3R)-3-hydroxyacyl]-alpha-D-glucosamine = a lipid A disaccharide + UDP + H(+). It participates in bacterial outer membrane biogenesis; LPS lipid A biosynthesis. In terms of biological role, condensation of UDP-2,3-diacylglucosamine and 2,3-diacylglucosamine-1-phosphate to form lipid A disaccharide, a precursor of lipid A, a phosphorylated glycolipid that anchors the lipopolysaccharide to the outer membrane of the cell. This Burkholderia pseudomallei (strain 1710b) protein is Lipid-A-disaccharide synthase.